The chain runs to 543 residues: Carboxypeptidase Y homolog A (543 aa).

The first 17 residues, 1–17, serve as a signal peptide directing secretion; the sequence is MKVATSALLVGAVSASV. The propeptide occupies 18–128; that stretch reads GPQQQVLKFP…KLENYSMRTK (111 aa). 2 N-linked (GlcNAc...) asparagine glycosylation sites follow: asparagine 122 and asparagine 213. Cystine bridges form between cysteine 182–cysteine 421, cysteine 316–cysteine 330, cysteine 340–cysteine 363, cysteine 347–cysteine 356, and cysteine 385–cysteine 391. Residue serine 269 is part of the active site. The active site involves aspartate 460. Asparagine 508 carries N-linked (GlcNAc...) asparagine glycosylation. Histidine 519 is an active-site residue.

This sequence belongs to the peptidase S10 family.

The protein localises to the vacuole. It carries out the reaction Release of a C-terminal amino acid with broad specificity.. Functionally, vacuolar carboxypeptidase involved in degradation of small peptides. Digests preferentially peptides containing an aliphatic or hydrophobic residue in P1' position, as well as methionine, leucine or phenylalanine in P1 position of ester substrate. The polypeptide is Carboxypeptidase Y homolog A (CPYA) (Leptosphaeria maculans (strain JN3 / isolate v23.1.3 / race Av1-4-5-6-7-8) (Blackleg fungus)).